The chain runs to 388 residues: Quinolone resistance protein NorA (388 aa).

Helical transmembrane passes span 5 to 25 (IFVLYFNIFLIFLGIGLVIPV), 42 to 62 (LLVAAFALSQMIISPFGGTLA), 69 to 89 (LIICIGLILFSVSEFMFAVGH), 99 to 119 (VIGGMSAGMVMPGVTGLIADV), 129 to 149 (FGYMSAIINSGFILGPGIGGF), 157 to 177 (MPFYFAGALGILAFIMSVVLI), 201 to 221 (WKVFITPAILTLVLAFGLSAF), 239 to 259 (DISIAITGGGIFGALFQIYFF), 269 to 289 (LTFIAWSLIYSVIVLVLLVIA), 293 to 313 (WTIMVISFAVFIGFDMIRPAI), 331 to 351 (LNSTFTSMGNFIGPLIAGALF), and 355 to 375 (IEAPIYMAIGVSLAGVVIVLI).

This sequence belongs to the major facilitator superfamily. TCR/Tet family.

Its subcellular location is the cell membrane. Functionally, involved in quinolone resistance. May constitute a membrane-associated active efflux pump of hydrophilic quinolones. The sequence is that of Quinolone resistance protein NorA (norA) from Staphylococcus aureus (strain MRSA252).